The primary structure comprises 611 residues: Pleckstrin homology domain-containing family N member 1 (611 aa).

The tract at residues Met1–Arg45 is disordered. A lipid anchor (N-myristoyl glycine) is attached at Gly2. The tract at residues Thr61–Ala100 is interaction with C1QBP. 2 PH domains span residues Val96 to Leu192 and Ala222 to Glu319. The residue at position 302 (Tyr302) is a Phosphotyrosine. Disordered regions lie at residues Pro323–Pro424, Glu438–Arg468, and Met483–Ile611. A compositionally biased stretch (low complexity) spans Gly341–Ser350. Polar residues predominate over residues Ser360–Arg391. Phosphotyrosine is present on Tyr456. Over residues Val498–Ser509 the composition is skewed to low complexity. Ser559 is subject to Phosphoserine. Basic and acidic residues predominate over residues Arg570–Asp585.

As to quaternary structure, found in a complex with cytochrome c mRNA and various ribosomal proteins. Interacts with C1QBP. Interacts with ELAVL1. Interacts with BID. Phosphorylation is essential for its mitochondrial localization and regulates its interaction with C1QBP. Ubiquitous. Epressed in several cancer cell lines of differing origin.

Its subcellular location is the cell membrane. The protein localises to the mitochondrion. The protein resides in the mitochondrion membrane. Its function is as follows. Controls the stability of the leptin mRNA harboring an AU-rich element (ARE) in its 3' UTR, in cooperation with the RNA stabilizer ELAVL1. Decreases the stability of the leptin mRNA by antagonizing the function of ELAVL1 by inducing its atypical recruitment from the nucleus to the cytosol. Binds to cardiolipin (CL), phosphatidic acid (PA), phosphatidylinositol 4-phosphate (PtdIns(4)P) and phosphatidylserine (PS). Promotes apoptosis by enhancing BAX-BAK hetero-oligomerization via interaction with BID in colon cancer cells. The protein is Pleckstrin homology domain-containing family N member 1 (PLEKHN1) of Homo sapiens (Human).